The chain runs to 110 residues: MRIFGPTGCRSLREDDPSLLSNAVYVIELALRMSPVPVSVQRKEHSDAEALYQQIRQALENGQPRLMELTCEKVEGKKVTLLVSEVLAVQLYEKAAAAGGSKRPGFSFDS.

This sequence belongs to the UPF0367 family.

This is UPF0367 protein Syncc9605_2376 from Synechococcus sp. (strain CC9605).